We begin with the raw amino-acid sequence, 309 residues long: Olfactory receptor 10J5 (309 aa).

Residues Met-1–Leu-27 lie on the Extracellular side of the membrane. Residues Phe-28 to Ile-48 traverse the membrane as a helical segment. At Thr-49 to Thr-57 the chain is on the cytoplasmic side. Residues Pro-58 to Val-78 traverse the membrane as a helical segment. Residues Pro-79–Ser-84 lie on the Extracellular side of the membrane. A helical transmembrane segment spans residues Leu-85 to Val-105. The cysteines at positions 97 and 178 are disulfide-linked. Residues Thr-106–Arg-131 are Cytoplasmic-facing. A helical membrane pass occupies residues Tyr-132–Gly-152. Residues Leu-153–Ser-203 lie on the Extracellular side of the membrane. The helical transmembrane segment at Phe-204–Ile-224 threads the bilayer. Residues Leu-225–Lys-235 lie on the Cytoplasmic side of the membrane. Residues Ala-236–Ile-256 traverse the membrane as a helical segment. Topologically, residues Ala-257–Asp-270 are extracellular. A helical membrane pass occupies residues Leu-271–Leu-291. Residues Arg-292–Ser-309 lie on the Cytoplasmic side of the membrane.

Belongs to the G-protein coupled receptor 1 family. As to expression, expressed in the olfactory epithelium as well as in the testis. Expressed in round spermatids during stages VI-VIII of spermatogenesis.

It localises to the cell membrane. Its function is as follows. Olfactory receptor. Activated by the synthetic floral odorant, lyral, and by alpha-cedrene, a sesquiterpene constituent of cedarwood oil. Its activation increases intracellular Ca(2+). Acts as a key regulator of myogenesis through its actions on cell migration and adhesion by activating the Ca(2+)-dependent AKT signal transduction pathway. Also acts as a regulator of angiogenesis. Moreover, plays a role in the regulation of lipid accumulation in hepatocytes via the cAMP-PKA pathway. Involved in sperm chemotaxis and motility. The protein is Olfactory receptor 10J5 of Mus musculus (Mouse).